Here is a 419-residue protein sequence, read N- to C-terminus: UPF0229 protein Tbd_1233 (419 aa).

The segment at 85–108 (GDRIDRPAGEGGGGSGGSPDGEGM) is disordered. A compositionally biased stretch (gly residues) spans 93–104 (GEGGGGSGGSPD).

Belongs to the UPF0229 family.

The polypeptide is UPF0229 protein Tbd_1233 (Thiobacillus denitrificans (strain ATCC 25259 / T1)).